Here is a 200-residue protein sequence, read N- to C-terminus: Phospholipase A2 inhibitor CgMIP-I (200 aa).

A signal peptide spans 1–19 (MKYLHTICLLFIFVARGNS). 7 disulfides stabilise this stretch: Cys-22–Cys-46, Cys-25–Cys-32, Cys-39–Cys-67, Cys-73–Cys-94, Cys-95–Cys-100, Cys-118–Cys-143, and Cys-136–Cys-165. Residue Asn-176 is glycosylated (N-linked (GlcNAc...) asparagine).

Belongs to the CNF-like-inhibitor family. In terms of assembly, homomer of 110 kDa composed of 20-25-kDa subunits. Post-translationally, N-glycosylated. The glycosidic chain may contain superficial sialic acid residues. In terms of tissue distribution, expressed by the liver.

Its subcellular location is the secreted. Functionally, inhibits the enzymatic activity of basic phospholipase A2. Specifically neutralizes PLA2, myotoxic, edema-forming, cytolytic, and anti-coagulant activities, as well as intracerebral lethal effect of the basic myotoxin I from the same venom (AC P0DQP6), crotoxin heterodimer and crotoxin subunit B alone. Does not block the enzymatic activity of crude acidic PLA2 fractions from the same venom. The protein is Phospholipase A2 inhibitor CgMIP-I of Cerrophidion godmani (Porthidium godmani).